A 420-amino-acid polypeptide reads, in one-letter code: 3-oxo-tetronate kinase (420 aa).

Residues Ser258, 360-363 (GGET), and Gly403 contribute to the ATP site.

This sequence belongs to the four-carbon acid sugar kinase family.

It catalyses the reaction 3-dehydro-L-erythronate + ATP = 3-dehydro-4-O-phospho-L-erythronate + ADP + H(+). The catalysed reaction is 3-dehydro-D-erythronate + ATP = 3-dehydro-4-O-phospho-D-erythronate + ADP + H(+). In terms of biological role, catalyzes the ATP-dependent phosphorylation of 3-oxo-tetronate to 3-oxo-tetronate 4-phosphate. The chain is 3-oxo-tetronate kinase from Salmonella typhimurium (strain LT2 / SGSC1412 / ATCC 700720).